A 158-amino-acid chain; its full sequence is Protein-export protein SecB (158 aa).

It belongs to the SecB family. In terms of assembly, homotetramer, a dimer of dimers. One homotetramer interacts with 1 SecA dimer.

It is found in the cytoplasm. One of the proteins required for the normal export of preproteins out of the cell cytoplasm. It is a molecular chaperone that binds to a subset of precursor proteins, maintaining them in a translocation-competent state. It also specifically binds to its receptor SecA. The sequence is that of Protein-export protein SecB from Anaplasma phagocytophilum (strain HZ).